The primary structure comprises 460 residues: tRNA modification GTPase MnmE (460 aa).

The (6S)-5-formyl-5,6,7,8-tetrahydrofolate site is built by R26, E88, and R127. Residues 222–381 (GLKVAIVGRP…LESAILSKVQ (160 aa)) enclose the TrmE-type G domain. N232 contributes to the K(+) binding site. Residues 232 to 237 (NVGKSS), 251 to 257 (TELPGTT), and 276 to 279 (DTAG) each bind GTP. Position 236 (S236) interacts with Mg(2+). Positions 251, 253, and 256 each coordinate K(+). Residue T257 participates in Mg(2+) binding. K460 lines the (6S)-5-formyl-5,6,7,8-tetrahydrofolate pocket.

Belongs to the TRAFAC class TrmE-Era-EngA-EngB-Septin-like GTPase superfamily. TrmE GTPase family. In terms of assembly, homodimer. Heterotetramer of two MnmE and two MnmG subunits. Requires K(+) as cofactor.

Its subcellular location is the cytoplasm. Exhibits a very high intrinsic GTPase hydrolysis rate. Involved in the addition of a carboxymethylaminomethyl (cmnm) group at the wobble position (U34) of certain tRNAs, forming tRNA-cmnm(5)s(2)U34. The polypeptide is tRNA modification GTPase MnmE (Cyanothece sp. (strain PCC 7425 / ATCC 29141)).